The primary structure comprises 260 residues: Thiazole synthase (260 aa).

The active-site Schiff-base intermediate with DXP is Lys-101. Residues Gly-162, 188–189, and 210–211 each bind 1-deoxy-D-xylulose 5-phosphate; these read AG and NT.

This sequence belongs to the ThiG family. In terms of assembly, homotetramer. Forms heterodimers with either ThiH or ThiS.

It localises to the cytoplasm. It carries out the reaction [ThiS sulfur-carrier protein]-C-terminal-Gly-aminoethanethioate + 2-iminoacetate + 1-deoxy-D-xylulose 5-phosphate = [ThiS sulfur-carrier protein]-C-terminal Gly-Gly + 2-[(2R,5Z)-2-carboxy-4-methylthiazol-5(2H)-ylidene]ethyl phosphate + 2 H2O + H(+). Its pathway is cofactor biosynthesis; thiamine diphosphate biosynthesis. Its function is as follows. Catalyzes the rearrangement of 1-deoxy-D-xylulose 5-phosphate (DXP) to produce the thiazole phosphate moiety of thiamine. Sulfur is provided by the thiocarboxylate moiety of the carrier protein ThiS. In vitro, sulfur can be provided by H(2)S. The chain is Thiazole synthase from Acidithiobacillus ferrooxidans (strain ATCC 23270 / DSM 14882 / CIP 104768 / NCIMB 8455) (Ferrobacillus ferrooxidans (strain ATCC 23270)).